We begin with the raw amino-acid sequence, 1063 residues long: MTTEDDDQMLGPSGTQEKIYVSVRMRPLNDKEKFRNDVPDWECINNTTIIYRSHLSISERSMYPSAYTFDRVFSPECCTRQVYEQGAKEVAFSVVSGVNASVFAYGQTSSGKTYTMSGITDCALVDIYGYIDKHKEREFILKFSAMEIYNESVRDLLSTDTSPLRLLDDPEKGTVVEKLTEETLRDWNHFKELLSVCKAQRQIGETALNEVSSRSHQILRLTVESIAREFSTNDKFSTLTATVNFIDLAGSERASQSLSAGTRLKEGCHINRSLLTLGTVIRKLSKEKTGHIPFRDSKLTRILQSSLGGNARTAIICTMSPARIHVEQSRNTLLFASCAKEVTTNAQVNVVMSDKALVKHLQRELAKLESELRSPSQASIVSDTTALLTEKDLEVEKLKKEVFQLAQQLEQARSEIKDLRRMVEEEKNQEKETLSTETEGLNVLMEHQYPKLRVRRTWDSENTTPLSPISAHRSSISPRSTEYSYEENVFQLSDFRIDSASSSPQQLAFVTPFLKVPLDDIHVTDTVDQSHVHKEEAIEEPHVQEERFYEMAEHTDGNSEDNCREVRCIETEKSDISIGPVENMPESSPDKYEAVTAEEPVSVTEPKNLQHPTEEAVCVTETKNLQHPTEAENEEEEEEERVKEVSGASPEPKQESNLTKNPALCDLECSPDEFDTSMSNLSRISTPPALITPSPEKPFSWIMERDSQLFRGMKLTRSRSCRPSLLSSPSSSWLEKDADTPPSWYDKEFIKTAERNLTMCDIKNQRLLQDEFSGRSMPTTWFERSLSDTQTVDAASHGVSNEMSPNESPFRPSDASVFELQTSGRASISQDRTEETAAQKDKQIIHRSMEEREQKFLASNSTKSFKDAAMDPIQDYLDTALNWPVEFKRLQREIIELWHVCKVSMAHRSYFFLLFRGDQKDCLYLEVELRRLKYIRESFAQNSNDGNNMTLISCTRALTRERYKLSKLMQRKLSKEERENLFLRWGIGLNTNHRRVQLARRLWSDYKDMGHVRESASLVGKLNGFVDMKLTSTEMFGVNYAFRPPRPKKSSLWKRSVLSLSFL.

Residues 18-342 (KIYVSVRMRP…LLFASCAKEV (325 aa)) form the Kinesin motor domain. 106-113 (GQTSSGKT) serves as a coordination point for ATP. Residues 351–436 (VMSDKALVKH…KNQEKETLST (86 aa)) adopt a coiled-coil conformation. The tract at residues 574–664 (SDISIGPVEN…ESNLTKNPAL (91 aa)) is disordered.

It belongs to the TRAFAC class myosin-kinesin ATPase superfamily. Kinesin family. KIN-7 subfamily.

This Arabidopsis thaliana (Mouse-ear cress) protein is Kinesin-like protein KIN-7H.